The primary structure comprises 59 residues: MNFTKLFAIVLLAALVLLGQTEAGGLKKLGKKLEGAGKRVFKASEKALPVVVGIKAIGK.

Positions 1-23 (MNFTKLFAIVLLAALVLLGQTEA) are cleaved as a signal peptide.

This sequence belongs to the cecropin family. As to expression, salivary gland (at protein level).

The protein localises to the secreted. In terms of biological role, antimicrobial peptide. Exhibits antibacterial activity against Gram-negative bacteria, such as Escherichia coli, Pseudomonas aeruginosa, Acinetobacter baumannii and Klebsiella pneumoniae. Shows no antibacterial effects against Gram-positive bacteria, such as Staphylococcus aureus, Enterococcus faecalis and Enterococcus faecium. Exhibits antiviral activity against all four dengue virus serotypes and chikungunya virus. Exhibits leishmanicidal activity. Partially neutralizes lipopolysaccharides (LPS). Exhibits anti-inflammatory properties: inhibits LPS-induced iNOS/NOS2 transcription, nitric oxide (NO) and pro-inflammatory cytokine production in mouse macrophages and human peripheral blood mononuclear cells (PBMCs); inhibits LPS-induced activation of MAPK and NF-kappa-B signaling pathways in mouse macrophages. This Aedes aegypti (Yellowfever mosquito) protein is Aedesin.